The sequence spans 88 residues: UPF0250 protein Shew_2940 (88 aa).

This sequence belongs to the UPF0250 family.

The protein is UPF0250 protein Shew_2940 of Shewanella loihica (strain ATCC BAA-1088 / PV-4).